Reading from the N-terminus, the 164-residue chain is Phosphopantetheine adenylyltransferase (164 aa).

Position 10 (Thr10) interacts with substrate. ATP contacts are provided by residues 10-11 and His18; that span reads TF. Substrate contacts are provided by Lys44, Leu76, and Arg90. Residues 91-93, Glu101, and 126-132 contribute to the ATP site; these read GLR and YAFISSS.

It belongs to the bacterial CoaD family. As to quaternary structure, homohexamer. Mg(2+) is required as a cofactor.

The protein resides in the cytoplasm. The catalysed reaction is (R)-4'-phosphopantetheine + ATP + H(+) = 3'-dephospho-CoA + diphosphate. It participates in cofactor biosynthesis; coenzyme A biosynthesis; CoA from (R)-pantothenate: step 4/5. Reversibly transfers an adenylyl group from ATP to 4'-phosphopantetheine, yielding dephospho-CoA (dPCoA) and pyrophosphate. The chain is Phosphopantetheine adenylyltransferase from Halorhodospira halophila (strain DSM 244 / SL1) (Ectothiorhodospira halophila (strain DSM 244 / SL1)).